The following is a 211-amino-acid chain: Small ribosomal subunit protein eS8 (211 aa).

The protein belongs to the eukaryotic ribosomal protein eS8 family.

This chain is Small ribosomal subunit protein eS8 (rps8), found in Dictyostelium discoideum (Social amoeba).